The primary structure comprises 191 residues: Thioredoxin F-type, chloroplastic (191 aa).

The region spanning 68–190 (KASLETAVGA…LVAAIEAARS (123 aa)) is the Thioredoxin domain. Catalysis depends on nucleophile residues C115 and C118. The cysteines at positions 115 and 118 are disulfide-linked.

It belongs to the thioredoxin family. Plant F-type subfamily. As to quaternary structure, forms a complex with heterodimeric ferredoxin-thioredoxin reductase (FTR) and ferredoxin.

The protein resides in the plastid. Its subcellular location is the chloroplast. Participates in various redox reactions through the reversible oxidation of the active center dithiol to a disulfide. The F form is known to activate a number of enzymes of the photosynthetic carbon cycle. This chain is Thioredoxin F-type, chloroplastic, found in Mesembryanthemum crystallinum (Common ice plant).